A 425-amino-acid polypeptide reads, in one-letter code: Glutamyl-tRNA(Gln) amidotransferase subunit A (425 aa).

Active-site charge relay system residues include K29 and S104. S128 functions as the Acyl-ester intermediate in the catalytic mechanism.

The protein belongs to the amidase family. GatA subfamily. Heterotrimer of A, B and C subunits.

The catalysed reaction is L-glutamyl-tRNA(Gln) + L-glutamine + ATP + H2O = L-glutaminyl-tRNA(Gln) + L-glutamate + ADP + phosphate + H(+). Functionally, allows the formation of correctly charged Gln-tRNA(Gln) through the transamidation of misacylated Glu-tRNA(Gln) in organisms which lack glutaminyl-tRNA synthetase. The reaction takes place in the presence of glutamine and ATP through an activated gamma-phospho-Glu-tRNA(Gln). The protein is Glutamyl-tRNA(Gln) amidotransferase subunit A of Haloarcula marismortui (strain ATCC 43049 / DSM 3752 / JCM 8966 / VKM B-1809) (Halobacterium marismortui).